A 119-amino-acid chain; its full sequence is DNA-binding protein TubR (119 aa).

In terms of assembly, homodimer. Binds to TubZ filaments via the C-terminus of TubZ. DNA is not required for binding to TubZ.

Its function is as follows. A DNA-binding protein that is part of the type III plasmid partition system used to ensure correct segregation of the pBc10987 plasmid. Binds TubZ filaments but does not influence the GTPase activity of TubZ with or without DNA. Cooperatively binds to multiple regions in tubC (centromere-like site) upstream of its own gene with consensus sequence N(T/A)ATTNC(C/G)GNAAT(A/T)N; probably forms an extended DNA-protein filament. Binds sites in its own promoter region and presumably represses its expression; its effect on RNA expression has not been shown. Does not specifically bind to the putative origin of replication on pBc10987. The polypeptide is DNA-binding protein TubR (Bacillus cereus (strain ATCC 10987 / NRS 248)).